Here is a 102-residue protein sequence, read N- to C-terminus: Small ribosomal subunit protein uS10 (102 aa).

This sequence belongs to the universal ribosomal protein uS10 family. In terms of assembly, part of the 30S ribosomal subunit.

In terms of biological role, involved in the binding of tRNA to the ribosomes. The polypeptide is Small ribosomal subunit protein uS10 (Nocardioides sp. (strain ATCC BAA-499 / JS614)).